The chain runs to 179 residues: Large ribosomal subunit protein uL5 (179 aa).

Belongs to the universal ribosomal protein uL5 family. Part of the 50S ribosomal subunit; part of the 5S rRNA/L5/L18/L25 subcomplex. Contacts the 5S rRNA and the P site tRNA. Forms a bridge to the 30S subunit in the 70S ribosome.

Functionally, this is one of the proteins that bind and probably mediate the attachment of the 5S RNA into the large ribosomal subunit, where it forms part of the central protuberance. In the 70S ribosome it contacts protein S13 of the 30S subunit (bridge B1b), connecting the 2 subunits; this bridge is implicated in subunit movement. Contacts the P site tRNA; the 5S rRNA and some of its associated proteins might help stabilize positioning of ribosome-bound tRNAs. In Dictyoglomus turgidum (strain DSM 6724 / Z-1310), this protein is Large ribosomal subunit protein uL5.